Consider the following 495-residue polypeptide: Putative aldehyde dehydrogenase AldA (495 aa).

Position 212–218 (glycine 212–glycine 218) interacts with NAD(+). Residues glutamate 256 and cysteine 290 contribute to the active site.

Belongs to the aldehyde dehydrogenase family.

It catalyses the reaction an aldehyde + NAD(+) + H2O = a carboxylate + NADH + 2 H(+). The chain is Putative aldehyde dehydrogenase AldA (aldA) from Staphylococcus aureus (strain Mu50 / ATCC 700699).